Consider the following 631-residue polypeptide: Nucleoside triphosphatase I (631 aa).

The Helicase ATP-binding domain occupies 42–204 (FLGLDSMHSL…TMLVNLLRPG (163 aa)). Position 55 to 62 (55 to 62 (HETGVGKT)) interacts with ATP. The short motif at 141–144 (DECH) is the DEXH box element. The Helicase C-terminal domain maps to 367 to 532 (KFIDVCLGIL…EFVQLFRVFK (166 aa)). A binding to the cap-specific mRNA (nucleoside-2'-O-)-methyltransferase region spans residues 457-524 (DIFILDMTWN…EIIQSKSKEF (68 aa)).

It belongs to the helicase family. NPH I subfamily. Monomer. Interacts (via C-terminus) with RAP94/OPG109 (via N-terminus). Interacts with the cap-specific mRNA (nucleoside-2'-O-)-methyltransferase OPG102.

Its subcellular location is the virion. The enzyme catalyses a ribonucleoside 5'-triphosphate + H2O = a ribonucleoside 5'-diphosphate + phosphate + H(+). Functionally, DNA-dependent ATPase that acts as a 5' to 3' translocase on single-stranded DNA and thereby plays a role in transcription termination of viral early genes. Uses forward translocation in concert with the viral RNA polymerase RAP94/OPG109 subunit and the capping enzyme/VTF to catalyze release of UUUUUNU-containing nascent RNA from the elongation complex. In addition, acts as a positive elongation factor to assist transcription through problematic sequences. This is Nucleoside triphosphatase I (OPG123) from Vaccinia virus (strain Copenhagen) (VACV).